A 303-amino-acid chain; its full sequence is Sulfate adenylyltransferase subunit 2 (303 aa).

It belongs to the PAPS reductase family. CysD subfamily. Heterodimer composed of CysD, the smaller subunit, and CysN.

The catalysed reaction is sulfate + ATP + H(+) = adenosine 5'-phosphosulfate + diphosphate. The protein operates within sulfur metabolism; hydrogen sulfide biosynthesis; sulfite from sulfate: step 1/3. With CysN forms the ATP sulfurylase (ATPS) that catalyzes the adenylation of sulfate producing adenosine 5'-phosphosulfate (APS) and diphosphate, the first enzymatic step in sulfur assimilation pathway. APS synthesis involves the formation of a high-energy phosphoric-sulfuric acid anhydride bond driven by GTP hydrolysis by CysN coupled to ATP hydrolysis by CysD. This is Sulfate adenylyltransferase subunit 2 from Bacteroides fragilis (strain YCH46).